We begin with the raw amino-acid sequence, 210 residues long: N-(5'-phosphoribosyl)anthranilate isomerase (210 aa).

The protein belongs to the TrpF family.

It catalyses the reaction N-(5-phospho-beta-D-ribosyl)anthranilate = 1-(2-carboxyphenylamino)-1-deoxy-D-ribulose 5-phosphate. Its pathway is amino-acid biosynthesis; L-tryptophan biosynthesis; L-tryptophan from chorismate: step 3/5. This is N-(5'-phosphoribosyl)anthranilate isomerase from Magnetococcus marinus (strain ATCC BAA-1437 / JCM 17883 / MC-1).